The following is a 312-amino-acid chain: Apulose-4-phosphate transketolase subunit B (312 aa).

This sequence belongs to the transketolase family. As to quaternary structure, probable heterodimer composed of AptA and AptB. The cofactor is thiamine diphosphate.

The enzyme catalyses apulose 4-phosphate + D-glyceraldehyde 3-phosphate = D-xylulose 5-phosphate + dihydroxyacetone phosphate. It functions in the pathway carbohydrate metabolism. Its function is as follows. Involved in catabolism of D-apiose. Catalyzes the transfer of the glycolaldehyde group from apulose-4-phosphate to D-glyceraldehyde 3-phosphate, generating dihydroxyacetone phosphate and D-xylulose-5-phosphate. In Phocaeicola vulgatus (strain ATCC 8482 / DSM 1447 / JCM 5826 / CCUG 4940 / NBRC 14291 / NCTC 11154) (Bacteroides vulgatus), this protein is Apulose-4-phosphate transketolase subunit B.